We begin with the raw amino-acid sequence, 429 residues long: uncharacterized protein (429 aa).

Catalysis depends on charge relay system residues Ser116, Asp179, and His206.

It belongs to the AB hydrolase 3 family.

It is found in the cytoplasm. It localises to the nucleus. This is an uncharacterized protein from Schizosaccharomyces pombe (strain 972 / ATCC 24843) (Fission yeast).